A 452-amino-acid chain; its full sequence is Pup--protein ligase (452 aa).

Glu-9 lines the Mg(2+) pocket. Arg-53 provides a ligand contact to ATP. Tyr-55 is a Mg(2+) binding site. Catalysis depends on Asp-57, which acts as the Proton acceptor. A Mg(2+)-binding site is contributed by Glu-63. Residues Thr-66 and Trp-419 each contribute to the ATP site.

The protein belongs to the Pup ligase/Pup deamidase family. Pup-conjugating enzyme subfamily.

The catalysed reaction is ATP + [prokaryotic ubiquitin-like protein]-L-glutamate + [protein]-L-lysine = ADP + phosphate + N(6)-([prokaryotic ubiquitin-like protein]-gamma-L-glutamyl)-[protein]-L-lysine.. The protein operates within protein degradation; proteasomal Pup-dependent pathway. Its pathway is protein modification; protein pupylation. Functionally, catalyzes the covalent attachment of the prokaryotic ubiquitin-like protein modifier Pup to the proteasomal substrate proteins, thereby targeting them for proteasomal degradation. This tagging system is termed pupylation. The ligation reaction involves the side-chain carboxylate of the C-terminal glutamate of Pup and the side-chain amino group of a substrate lysine. In Mycobacterium leprae (strain Br4923), this protein is Pup--protein ligase.